A 572-amino-acid chain; its full sequence is Proline--tRNA ligase (572 aa).

It belongs to the class-II aminoacyl-tRNA synthetase family. ProS type 1 subfamily. As to quaternary structure, homodimer.

Its subcellular location is the cytoplasm. The catalysed reaction is tRNA(Pro) + L-proline + ATP = L-prolyl-tRNA(Pro) + AMP + diphosphate. Functionally, catalyzes the attachment of proline to tRNA(Pro) in a two-step reaction: proline is first activated by ATP to form Pro-AMP and then transferred to the acceptor end of tRNA(Pro). As ProRS can inadvertently accommodate and process non-cognate amino acids such as alanine and cysteine, to avoid such errors it has two additional distinct editing activities against alanine. One activity is designated as 'pretransfer' editing and involves the tRNA(Pro)-independent hydrolysis of activated Ala-AMP. The other activity is designated 'posttransfer' editing and involves deacylation of mischarged Ala-tRNA(Pro). The misacylated Cys-tRNA(Pro) is not edited by ProRS. This chain is Proline--tRNA ligase, found in Salmonella choleraesuis (strain SC-B67).